The primary structure comprises 135 residues: Thioredoxin H5 (135 aa).

The Thioredoxin domain maps to 13–128; it reads EHLDYSGGNV…LQEKFEQLNR (116 aa). Catalysis depends on nucleophile residues Cys-54 and Cys-57. Cys-54 and Cys-57 form a disulfide bridge.

It belongs to the thioredoxin family. Plant H-type subfamily.

The protein resides in the cytoplasm. Functionally, probable thiol-disulfide oxidoreductase that may be involved in the redox regulation of a number of cytosolic enzymes. This chain is Thioredoxin H5, found in Oryza sativa subsp. japonica (Rice).